The primary structure comprises 347 residues: Phosphoribosylformylglycinamidine cyclo-ligase (347 aa).

It belongs to the AIR synthase family.

Its subcellular location is the cytoplasm. The enzyme catalyses 2-formamido-N(1)-(5-O-phospho-beta-D-ribosyl)acetamidine + ATP = 5-amino-1-(5-phospho-beta-D-ribosyl)imidazole + ADP + phosphate + H(+). Its pathway is purine metabolism; IMP biosynthesis via de novo pathway; 5-amino-1-(5-phospho-D-ribosyl)imidazole from N(2)-formyl-N(1)-(5-phospho-D-ribosyl)glycinamide: step 2/2. In Yersinia pseudotuberculosis serotype O:1b (strain IP 31758), this protein is Phosphoribosylformylglycinamidine cyclo-ligase.